Consider the following 285-residue polypeptide: RNA polymerase sigma factor RpoH (285 aa).

Residues 53–122 are sigma-70 factor domain-2; that stretch reads LILSHLRFVV…IHEYVLRNWR (70 aa). Residues 77–80 carry the Interaction with polymerase core subunit RpoC motif; sequence DLVQ. Residues 229 to 280 form a sigma-70 factor domain-4 region; that stretch reads ALASLDERSQHIVRSRWLDDDKATLQDLAEMYGVSAERIRQLEKNAMKKLKM. The segment at residues 253–272 is a DNA-binding region (H-T-H motif); it reads LQDLAEMYGVSAERIRQLEK.

It belongs to the sigma-70 factor family. RpoH subfamily. In terms of assembly, interacts with the RNA polymerase core enzyme.

It localises to the cytoplasm. Its function is as follows. Sigma factors are initiation factors that promote the attachment of RNA polymerase to specific initiation sites and are then released. This sigma factor is involved in regulation of expression of heat shock genes. The protein is RNA polymerase sigma factor RpoH of Vibrio vulnificus (strain CMCP6).